The following is a 91-amino-acid chain: MPILKERKWELIRSFQHHDKDTGSPEVQIAILTERINKLTEHMKQNKKDLHSRRGLIAMVNKRKALLDYLKRKNYQKYLEVSEKLNLRVKN.

This sequence belongs to the universal ribosomal protein uS15 family. In terms of assembly, part of the 30S ribosomal subunit. Forms a bridge to the 50S subunit in the 70S ribosome, contacting the 23S rRNA.

Its function is as follows. One of the primary rRNA binding proteins, it binds directly to 16S rRNA where it helps nucleate assembly of the platform of the 30S subunit by binding and bridging several RNA helices of the 16S rRNA. In terms of biological role, forms an intersubunit bridge (bridge B4) with the 23S rRNA of the 50S subunit in the ribosome. In Hydrogenobaculum sp. (strain Y04AAS1), this protein is Small ribosomal subunit protein uS15.